The following is a 434-amino-acid chain: Enolase (434 aa).

Gln-165 is a (2R)-2-phosphoglycerate binding site. The active-site Proton donor is the Glu-207. 3 residues coordinate Mg(2+): Asp-244, Glu-291, and Asp-318. Positions 343, 372, 373, and 394 each coordinate (2R)-2-phosphoglycerate. Lys-343 functions as the Proton acceptor in the catalytic mechanism.

The protein belongs to the enolase family. Requires Mg(2+) as cofactor.

The protein resides in the cytoplasm. Its subcellular location is the secreted. The protein localises to the cell surface. It carries out the reaction (2R)-2-phosphoglycerate = phosphoenolpyruvate + H2O. The protein operates within carbohydrate degradation; glycolysis; pyruvate from D-glyceraldehyde 3-phosphate: step 4/5. Catalyzes the reversible conversion of 2-phosphoglycerate (2-PG) into phosphoenolpyruvate (PEP). It is essential for the degradation of carbohydrates via glycolysis. The sequence is that of Enolase from Staphylococcus epidermidis (strain ATCC 35984 / DSM 28319 / BCRC 17069 / CCUG 31568 / BM 3577 / RP62A).